Consider the following 2256-residue polypeptide: Death-inducer obliterator 1 (2256 aa).

Met-1 carries the N-acetylmethionine modification. Over residues 1–25 (MDDKGHLSNEEAPKAIKPTSKEFRK) the composition is skewed to basic and acidic residues. The tract at residues 1–256 (MDDKGHLSNE…NPREAGKPKP (256 aa)) is disordered. Polar residues-rich tracts occupy residues 48–59 (SEQQPQQHNLSL) and 96–119 (EPTS…SSEI). Residues Ser-58 and Ser-112 each carry the phosphoserine modification. Basic and acidic residues predominate over residues 128–142 (LGKEHPASSEKAKGG). Residues 143 to 153 (EEEEDTSDSDS) are compositionally biased toward acidic residues. Phosphothreonine is present on Thr-148. A phosphoserine mark is found at Ser-149 and Ser-151. 2 consecutive short sequence motifs (nuclear localization signal) follow at residues 162–170 (QNRLRRKRE) and 182–190 (QNRLRKKRR). Residues 169-178 (REQEPVERSL) show a composition bias toward basic and acidic residues. 2 stretches are compositionally biased toward basic and acidic residues: residues 206–216 (EQDRPLCKQEP) and 246–256 (ENPREAGKPKP). A PHD-type zinc finger spans residues 265–319 (ALYCICRQPHNNRFMICCDRCEEWFHGDCVGISEARGRLLERNGEDYICPNCTIL). Disordered regions lie at residues 481 to 535 (LASR…DDRR), 598 to 624 (RPWP…ASKK), 641 to 668 (ANVP…SQIR), 778 to 822 (SRTK…PEKS), 856 to 970 (QVPS…TALS), 1011 to 1039 (AKPS…PPEG), and 1197 to 1218 (PSSA…QEEL). Residues 495–506 (ESSTPSWASDHN) are compositionally biased toward polar residues. Ser-522 is subject to Phosphoserine. Positions 667–787 (IRQNIRRSLK…SRTKLLNESK (121 aa)) constitute a TFIIS central domain. Residues 778-788 (SRTKLLNESKK) show a composition bias toward basic and acidic residues. Acidic residues predominate over residues 797-812 (PDMEDSPPVSDSEEQQ). Phosphoserine occurs at positions 802 and 806. Composition is skewed to basic and acidic residues over residues 875–886 (SKKEDFKPRHDS) and 921–935 (QERK…DSHP). Residue Lys-876 forms a Glycyl lysine isopeptide (Lys-Gly) (interchain with G-Cter in SUMO2) linkage. A Phosphoserine modification is found at Ser-886. Residues 937–962 (PSSLGGLSPSSASGGSGVVTTVTMSG) are compositionally biased toward low complexity. Phosphoserine occurs at positions 1016, 1027, and 1035. Residues 1202–1215 (ELDKTDEKRTRLQQ) show a composition bias toward basic and acidic residues. Tyr-1239 is modified (phosphotyrosine). The segment at 1245–1288 (DTAATSTTPPGSPPPPPPLPEPPVLKILSSLKPGSTSTVTAPTT) is disordered. The residue at position 1252 (Thr-1252) is a Phosphothreonine. Pro residues predominate over residues 1254–1267 (PGSPPPPPPLPEPP). Ser-1256 carries the post-translational modification Phosphoserine. Low complexity predominate over residues 1279-1288 (STSTVTAPTT). Position 1307 is a phosphoserine (Ser-1307). Disordered stretches follow at residues 1320–1347 (KKSF…KGED), 1362–1421 (FGQF…VAYD), 1509–1609 (SDAL…EAKE), and 1630–2256 (QKCE…AAQA). Residues 1371–1387 (LEEEEEDDRPYDPEEEY) show a composition bias toward acidic residues. The residue at position 1514 (Ser-1514) is a Phosphoserine. Residues 1526 to 1546 (LFSQEQQAPDPSQGAPNTNHN) are compositionally biased toward polar residues. A compositionally biased stretch (basic and acidic residues) spans 1547–1557 (LDSRQSRDPRQ). Residues 1649 to 1666 (PTAGDGAARPAPPRRVLL) show a composition bias toward low complexity. Over residues 1667-1679 (PTPPSTTFPPSFP) the composition is skewed to pro residues. Over residues 1699–1712 (TFMSQETSLGSSQY) the composition is skewed to polar residues. Ser-1726 bears the Phosphoserine mark. Over residues 1783 to 1792 (FPGPRGPVPP) the composition is skewed to pro residues. Arg-1848 bears the Omega-N-methylarginine mark. Residues 1855 to 1869 (FEDRKDPHGEKREFQ) show a composition bias toward basic and acidic residues. Residues Arg-1904, Arg-1905, Arg-1988, Arg-1993, Arg-2004, Arg-2019, and Arg-2035 each carry the asymmetric dimethylarginine modification. Composition is skewed to basic and acidic residues over residues 2081 to 2113 (EFRE…KPLD) and 2123 to 2246 (RQGR…EART).

As to quaternary structure, interacts specifically (via PHD-type zinc finger) with histone H3 that is trimethylated at 'Lys-4' (H3K4me3), histone phosphorylation at 'Thr-3' or 'Thr-6' disrupts this binding and promotes translocation of DIDO1 from chromatin to the mitotic spindle during mitosis. In terms of tissue distribution, ubiquitous. Expressed at intermediate levels.

It is found in the cytoplasm. Its subcellular location is the nucleus. The protein localises to the cytoskeleton. The protein resides in the spindle. Its function is as follows. Required for early embryonic stem cell development. Putative transcription factor, weakly pro-apoptotic when overexpressed. The sequence is that of Death-inducer obliterator 1 (Dido1) from Mus musculus (Mouse).